Reading from the N-terminus, the 151-residue chain is Sec-independent protein translocase protein TatB (151 aa).

Residues 1–21 traverse the membrane as a helical segment; it reads MFDVSFTELMVIGVIALVVIG. Residues 66 to 151 form a disordered region; that stretch reads MDETARSMQT…DKTPPTGSAT (86 aa). Positions 93–103 are enriched in basic and acidic residues; the sequence is AELDDTARDAS. Composition is skewed to low complexity over residues 109 to 122 and 133 to 151; these read ADAP…VASD and APPA…GSAT.

The protein belongs to the TatB family. In terms of assembly, the Tat system comprises two distinct complexes: a TatABC complex, containing multiple copies of TatA, TatB and TatC subunits, and a separate TatA complex, containing only TatA subunits. Substrates initially bind to the TatABC complex, which probably triggers association of the separate TatA complex to form the active translocon.

It is found in the cell inner membrane. Part of the twin-arginine translocation (Tat) system that transports large folded proteins containing a characteristic twin-arginine motif in their signal peptide across membranes. Together with TatC, TatB is part of a receptor directly interacting with Tat signal peptides. TatB may form an oligomeric binding site that transiently accommodates folded Tat precursor proteins before their translocation. The sequence is that of Sec-independent protein translocase protein TatB from Bordetella parapertussis (strain 12822 / ATCC BAA-587 / NCTC 13253).